The primary structure comprises 479 residues: MKYQVVIGLEVHVQLLTNSKIFCGCSTRFGAEPNSQTCPVCLGMPGALPVLNKKVVEYAIRAGLATNCRIAPRSVFARKNYFYPDLPKGYQISQFELPICIDGHLDIEVEGGMKRIGITRIHMEEDAGKLVHADVPGVGDDSCVDLNRACTPLLEIVSEPDMRSADEAVAYLKKLHQIVVYLGISDGNMEEGSFRCDANVSVMPAGSDKFGTRTETKNVNSFKFVKQAIEYEIERQIEVIEEGGKIVQETRLFDPNTGSTRSMRGKEEAHDYRYFPDPDLVPLVIGNDWVEDARLSLPELPDAKRQRYTDELGLPVYDAEVLTATRELAGYFEACLALSPQPKPVANWVMGEVTRALNEENRSIADCPVTPPLLADLLRLIEKGTISGKIAKTVFDEMWRSGKAPEKIVEEKGLVQVSDTGAIEAIIDEVLAKEAGQVEEYRSGKDKLFGFFVGQVMRASKGKANPALVNEILLKKLNG.

This sequence belongs to the GatB/GatE family. GatB subfamily. In terms of assembly, heterotrimer of A, B and C subunits.

It catalyses the reaction L-glutamyl-tRNA(Gln) + L-glutamine + ATP + H2O = L-glutaminyl-tRNA(Gln) + L-glutamate + ADP + phosphate + H(+). It carries out the reaction L-aspartyl-tRNA(Asn) + L-glutamine + ATP + H2O = L-asparaginyl-tRNA(Asn) + L-glutamate + ADP + phosphate + 2 H(+). In terms of biological role, allows the formation of correctly charged Asn-tRNA(Asn) or Gln-tRNA(Gln) through the transamidation of misacylated Asp-tRNA(Asn) or Glu-tRNA(Gln) in organisms which lack either or both of asparaginyl-tRNA or glutaminyl-tRNA synthetases. The reaction takes place in the presence of glutamine and ATP through an activated phospho-Asp-tRNA(Asn) or phospho-Glu-tRNA(Gln). This Geotalea uraniireducens (strain Rf4) (Geobacter uraniireducens) protein is Aspartyl/glutamyl-tRNA(Asn/Gln) amidotransferase subunit B.